The primary structure comprises 354 residues: Protein RecA (354 aa).

An ATP-binding site is contributed by 67–74 (GPESSGKT).

Belongs to the RecA family.

The protein resides in the cytoplasm. Its function is as follows. Can catalyze the hydrolysis of ATP in the presence of single-stranded DNA, the ATP-dependent uptake of single-stranded DNA by duplex DNA, and the ATP-dependent hybridization of homologous single-stranded DNAs. It interacts with LexA causing its activation and leading to its autocatalytic cleavage. This Serratia marcescens protein is Protein RecA.